An 826-amino-acid polypeptide reads, in one-letter code: 1,4-alpha-glucan-branching enzyme 1, chloroplastic/amyloplastic (826 aa).

A chloroplast-targeting transit peptide spans 1–58 (ATTTTTTHNSKNKQYLAKQKPVELTLGYQNPNGCKVCSFGSKGSIYQKVSSGFKGVSV). Residue aspartate 409 is the Nucleophile of the active site. The active-site Proton donor is glutamate 464. Residues 782 to 813 (DTDVARIPDVSMESEDSNLDRIEDNSEDAVDA) form a disordered region.

The protein belongs to the glycosyl hydrolase 13 family. GlgB subfamily. In terms of assembly, monomer. In terms of tissue distribution, expressed in roots, leaves, stipules, pods and flowers.

It is found in the plastid. The protein localises to the chloroplast. Its subcellular location is the amyloplast. The catalysed reaction is Transfers a segment of a (1-&gt;4)-alpha-D-glucan chain to a primary hydroxy group in a similar glucan chain.. It participates in glycan biosynthesis; starch biosynthesis. Its function is as follows. Catalyzes the formation of the alpha-1,6-glucosidic linkages in starch by scission of a 1,4-alpha-linked oligosaccharide from growing alpha-1,4-glucan chains and the subsequent attachment of the oligosaccharide to the alpha-1,6 position. May preferentially transfer long chains during branching. In Pisum sativum (Garden pea), this protein is 1,4-alpha-glucan-branching enzyme 1, chloroplastic/amyloplastic (SBEII).